A 299-amino-acid chain; its full sequence is ATP phosphoribosyltransferase (299 aa).

This sequence belongs to the ATP phosphoribosyltransferase family. Long subfamily. As to quaternary structure, equilibrium between an active dimeric form, an inactive hexameric form and higher aggregates. Interconversion between the various forms is largely reversible and is influenced by the natural substrates and inhibitors of the enzyme. The cofactor is Mg(2+).

It localises to the cytoplasm. It catalyses the reaction 1-(5-phospho-beta-D-ribosyl)-ATP + diphosphate = 5-phospho-alpha-D-ribose 1-diphosphate + ATP. It participates in amino-acid biosynthesis; L-histidine biosynthesis; L-histidine from 5-phospho-alpha-D-ribose 1-diphosphate: step 1/9. Feedback inhibited by histidine. Functionally, catalyzes the condensation of ATP and 5-phosphoribose 1-diphosphate to form N'-(5'-phosphoribosyl)-ATP (PR-ATP). Has a crucial role in the pathway because the rate of histidine biosynthesis seems to be controlled primarily by regulation of HisG enzymatic activity. The protein is ATP phosphoribosyltransferase of Escherichia coli O81 (strain ED1a).